A 302-amino-acid chain; its full sequence is Putative RING-H2 finger protein ATL35 (302 aa).

The N-terminal stretch at 1–31 (MTIFARDLIYRIETKVLLPLFLVHLLPYVTC) is a signal peptide. A helical membrane pass occupies residues 50–70 (TVIAIIVLAIFISLSMVACFL). The RING-type; atypical zinc finger occupies 123–165 (CAICLSEFVDKETLRWMPPCSHTFHANCIDVWLSSQSTCPACR). Ser-226 is modified (phosphoserine).

This sequence belongs to the RING-type zinc finger family. ATL subfamily.

It is found in the membrane. It catalyses the reaction S-ubiquitinyl-[E2 ubiquitin-conjugating enzyme]-L-cysteine + [acceptor protein]-L-lysine = [E2 ubiquitin-conjugating enzyme]-L-cysteine + N(6)-ubiquitinyl-[acceptor protein]-L-lysine.. Its pathway is protein modification; protein ubiquitination. This is Putative RING-H2 finger protein ATL35 (ATL35) from Arabidopsis thaliana (Mouse-ear cress).